The primary structure comprises 597 residues: Elongation factor 4 (597 aa).

The 183-residue stretch at 2–184 (DHIRNFSIIA…SLIAKVPPPK (183 aa)) folds into the tr-type G domain. Residues 14–19 (DHGKST) and 131–134 (NKID) contribute to the GTP site.

It belongs to the TRAFAC class translation factor GTPase superfamily. Classic translation factor GTPase family. LepA subfamily.

Its subcellular location is the cell inner membrane. It catalyses the reaction GTP + H2O = GDP + phosphate + H(+). Its function is as follows. Required for accurate and efficient protein synthesis under certain stress conditions. May act as a fidelity factor of the translation reaction, by catalyzing a one-codon backward translocation of tRNAs on improperly translocated ribosomes. Back-translocation proceeds from a post-translocation (POST) complex to a pre-translocation (PRE) complex, thus giving elongation factor G a second chance to translocate the tRNAs correctly. Binds to ribosomes in a GTP-dependent manner. This Burkholderia lata (strain ATCC 17760 / DSM 23089 / LMG 22485 / NCIMB 9086 / R18194 / 383) protein is Elongation factor 4.